Consider the following 2282-residue polypeptide: Ectopic P granules protein 5 homolog (2282 aa).

The protein belongs to the EPG5 family.

Its function is as follows. Involved in autophagy. This is Ectopic P granules protein 5 homolog from Aedes aegypti (Yellowfever mosquito).